Here is an 828-residue protein sequence, read N- to C-terminus: Calpain-A (828 aa).

The 14-residue stretch at 1 to 14 folds into the EF-hand 1 domain; it reads MDDLRGFLRQAGQE. The Calpain catalytic domain maps to 88 to 387; sequence LFEDPLFPAS…FDRVEICNLS (300 aa). Catalysis depends on residues Cys143, His299, and Asn327. The segment at 388–557 is domain III; the sequence is PDSLTEDQQN…TQNNMEENDD (170 aa). The tract at residues 558–577 is linker; it reads HVGYGGKADTITPGFPTPKP. The interval 578–828 is domain IV; the sequence is IDPQKEGLRR…EEWIERTIYS (251 aa). EF-hand domains are found at residues 579-614, 699-734, 729-764, and 764-799; these read DPQK…SMRD, FSKD…IAKW, SEIA…AGYH, and HLNN…IKTY. The Ca(2+) site is built by Asp712, Asp714, Ser716, Lys718, Glu723, Asp742, Thr746, Arg748, and Gln753.

This sequence belongs to the peptidase C2 family. Undergoes calcium-dependent autolytic cleavage between Lys-54 and Asn-55, which is necessary for activation of the protein. Localized to the anterior and posterior embryonic poles just after fertilization. Becomes distributed around the polar buds and just below the pole cells of the posterior pole during cleavage cycles. During these nuclear divisions anterior localization disappears. Localized to actin caps that underlie the plasma membrane, immediately above each nucleus at cleavage cycles 8 and 9. Localized to a small set of nerve, midgut and blood cells in adults.

It localises to the cytoplasm. Activated by millimolar concentrations of calcium, and by phosphatidylinositol 4,5-diphosphate, phosphatidylinositol 4-monophosphate, phosphatidylinositol and phosphatidic acid. Calcium-regulated non-lysosomal thiol-protease. Involved in the organization of the actin-related cytoskeleton during embryogenesis. The polypeptide is Calpain-A (CalpA) (Drosophila melanogaster (Fruit fly)).